The primary structure comprises 59 residues: MKKISFLLLLAIVICSIGWTDGQFTDVRCSASSKCWPVCKKLFGTYKGKCKNSKCRCYS.

Positions 1–22 are cleaved as a signal peptide; that stretch reads MKKISFLLLLAIVICSIGWTDG. Gln23 carries the post-translational modification Pyrrolidone carboxylic acid. Disulfide bonds link Cys29–Cys50, Cys35–Cys55, and Cys39–Cys57.

The protein belongs to the short scorpion toxin superfamily. Potassium channel inhibitor family. Alpha-KTx 01 subfamily. Expressed by the venom gland.

The protein localises to the secreted. Its function is as follows. Potent blocker of both large-conductance calcium-activated potassium channels (KCa1.1/KCNMA1) and voltage-gated potassium channels (Kv1.3/KCNA3 and ERG1/Kv11.1/KCNH2). The sequence is that of Potassium channel toxin alpha-KTx 1.14 from Olivierus martensii (Manchurian scorpion).